The following is a 702-amino-acid chain: Elongation factor G (702 aa).

The 283-residue stretch at 8–290 (SRYRNIGISA…AVIEYLPSPT (283 aa)) folds into the tr-type G domain. Residues 17 to 24 (AHIDAGKT), 88 to 92 (DTPGH), and 142 to 145 (NKMD) contribute to the GTP site.

This sequence belongs to the TRAFAC class translation factor GTPase superfamily. Classic translation factor GTPase family. EF-G/EF-2 subfamily.

It localises to the cytoplasm. Catalyzes the GTP-dependent ribosomal translocation step during translation elongation. During this step, the ribosome changes from the pre-translocational (PRE) to the post-translocational (POST) state as the newly formed A-site-bound peptidyl-tRNA and P-site-bound deacylated tRNA move to the P and E sites, respectively. Catalyzes the coordinated movement of the two tRNA molecules, the mRNA and conformational changes in the ribosome. In Edwardsiella ictaluri (strain 93-146), this protein is Elongation factor G.